A 696-amino-acid polypeptide reads, in one-letter code: Tensin-4 (696 aa).

Positions 1 to 14 (MSSSLLAGGHMVSL) are cleaved as a signal peptide. Disordered stretches follow at residues 157 to 246 (LDGP…RAPQ), 271 to 344 (SLPH…CPAS), and 356 to 416 (LING…KDMQ). Residues 192-203 (SSSNESLIFSGN) are compositionally biased toward polar residues. Position 230 is a phosphoserine (S230). A compositionally biased stretch (low complexity) spans 271–304 (SLPHSSLSSYPSSSRSLGSPASSSSSLHSLDRGS). 2 stretches are compositionally biased toward polar residues: residues 326 to 344 (QAVQSTPVAKEQASSCPAS) and 372 to 397 (PGHQDSVQSRVTSPSHLCQAIKSPSK). The SH2 domain maps to 429 to 536 (WFKPSITREQ…ALPCKLTIPQ (108 aa)). The PTB domain occupies 563 to 690 (CHTLYLSSVS…QVISLVTALL (128 aa)).

Belongs to the PTEN phosphatase protein family. Interacts (via SH2 domain) with Rho GTPase-activating protein DLC1 (via C-terminus); the interaction is independent of DLC1 tyrosine phosphorylation. Interacts with integrin ITGB1; the interaction displaces tensin TNS3 from the ITGB1 cytoplasmic tail and promotes ITGB1 stability. Interacts (via SH2 domain) with E3 ubiquitin-protein ligase CBL (phosphorylated on 'Tyr-780'); the interaction is enhanced in the presence of EGF and reduces interaction of CBL with EGFR. Interacts (via SH2 domain) with receptor tyrosine kinase MET (when phosphorylated); the interaction increases MET protein stability.

The protein localises to the cell junction. It is found in the focal adhesion. The protein resides in the cytoplasm. It localises to the cytoskeleton. Its function is as follows. Promotes EGF-induced cell migration by displacing tensin TNS3 from the cytoplasmic tail of integrin ITGB1 which results in dissociation of TNS3 from focal adhesions, disassembly of actin stress fibers and initiation of cell migration. Suppresses ligand-induced degradation of EGFR by reducing EGFR ubiquitination in the presence of EGF. Increases MET protein stability by inhibiting MET endocytosis and subsequent lysosomal degradation which leads to increased cell survival, proliferation and migration. The sequence is that of Tensin-4 (Tns4) from Mus musculus (Mouse).